Consider the following 345-residue polypeptide: CCAAT/enhancer-binding protein beta (345 aa).

The tract at residues Met-1–Met-24 is required for Lys-174 sumoylation. Residue Arg-3 is modified to Asymmetric dimethylarginine; by CARM1. Positions Met-24–Ala-135 are required for MYC transcriptional repression. At Lys-43 the chain carries N6-acetyllysine; alternate. Residue Lys-43 is modified to N6-methylated lysine; alternate. 2 disordered regions span residues Pro-46 to Gly-67 and Leu-79 to Asp-116. Residues Ala-47–Pro-59 are compositionally biased toward pro residues. The span at Ala-84–Ala-100 shows a compositional bias: low complexity. Residues Asp-116–Asp-124 carry the 9aaTAD motif. N6-acetyllysine; by KAT2A and KAT2B is present on residues Lys-129 and Lys-132. Lys-133 bears the N6-acetyllysine; by KAT2A and KAT2B; alternate mark. Lys-133 participates in a covalent cross-link: Glycyl lysine isopeptide (Lys-Gly) (interchain with G-Cter in SUMO2); alternate. The interval Phe-157–Gly-178 is disordered. The span at Leu-160–Ala-171 shows a compositional bias: pro residues. Residue Lys-174 forms a Glycyl lysine isopeptide (Lys-Gly) (interchain with G-Cter in SUMO2); alternate linkage. Lys-174 participates in a covalent cross-link: Glycyl lysine isopeptide (Lys-Gly) (interchain with G-Cter in SUMO); alternate. Residues Lys-185 and Lys-187 each participate in a glycyl lysine isopeptide (Lys-Gly) (interchain with G-Cter in SUMO2) cross-link. The segment covering Ser-218 to Pro-232 has biased composition (low complexity). The interval Ser-218–Ser-271 is disordered. Thr-226 bears the Phosphothreonine; by GSK3-beta mark. O-linked (GlcNAc) serine glycans are attached at residues Ser-227 and Ser-228. The residue at position 231 (Ser-231) is a Phosphoserine; by GSK3-beta. Position 235 is a phosphothreonine; by RPS6KA1, CDK2 and MAPK (Thr-235). Residues Lys-260 and Lys-262 each participate in a glycyl lysine isopeptide (Lys-Gly) (interchain with G-Cter in SUMO2) cross-link. The residue at position 266 (Thr-266) is a Phosphothreonine; by RPS6KA1 and PKC/PRKCA. A bZIP domain is found at Ser-271–Leu-334. The interval Lys-275–Arg-295 is basic motif. Ser-288 bears the Phosphoserine; by PKC/PRKCA mark. The tract at residues Leu-297–Leu-304 is leucine-zipper. Ser-325 carries the phosphoserine; by CaMK2 modification. Residue Lys-332 forms a Glycyl lysine isopeptide (Lys-Gly) (interchain with G-Cter in SUMO2) linkage.

The protein belongs to the bZIP family. C/EBP subfamily. In terms of assembly, binds DNA as a homodimer and as a heterodimer. Interacts with ATF4. Binds DNA as a heterodimer with ATF4. Interacts with MYB; within the complex, MYB and CEBPB bind to different promoter regions. Can form stable heterodimers with CEBPD. Can form stable heterodimers with CEBPA and CEBPE. Interacts with SIX1. Isoform 2 and isoform 3 also form heterodimers. Interacts with TRIM28 and PTGES2. Interacts with PRDM16. Interacts with CCDC85B. Forms a complex with THOC5. Interacts with ZNF638; this interaction increases transcriptional activation. Interacts with CIDEA and CIDEC; these interactions increase transcriptional activation of a subset of CEBPB downstream target genes. Interacts with DDIT3/CHOP. Interacts with EP300; recruits EP300 to chromatin. Interacts with RORA; the interaction disrupts interaction with EP300. Interacts (not methylated) with MED23, MED26, SMARCA2, SMARCB1 and SMARCC1. Interacts with KAT2A and KAT2B. Interacts with ATF5; EP300 is required for ATF5 and CEBPB interaction and DNA binding. Interacts with NFE2L1; the heterodimer represses expression of DSPP during odontoblast differentiation. Methylated. Methylation at Arg-3 by CARM1 and at Lys-43 by EHMT2 inhibit transactivation activity. Methylation is probably inhibited by phosphorylation at Thr-235. Post-translationally, sumoylated by polymeric chains of SUMO2 or SUMO3. Sumoylation at Lys-174 is required for inhibition of T-cells proliferation. In adipocytes, sumoylation at Lys-174 by PIAS1 leads to ubiquitination and subsequent proteasomal degradation. Desumoylated by SENP2, which abolishes ubiquitination and stabilizes protein levels. In terms of processing, ubiquitinated, leading to proteasomal degradation. Phosphorylated at Thr-235 by MAPK and CDK2, serves to prime phosphorylation at Thr-226 and Ser-231 by GSK3B and acquire DNA-binding as well as transactivation activities, required to induce adipogenesis. MAPK and CDK2 act sequentially to maintain Thr-235 in the primed phosphorylated state during mitotical cloning expansion and thereby progression of terminal differentiation. Phosphorylation at Thr-266 enhances transactivation activity. Phosphorylation at Ser-325 in response to calcium increases transactivation activity. Phosphorylated at Thr-235 by RPS6KA1. Post-translationally, O-glycosylated, glycosylation at Ser-227 and Ser-228 prevents phosphorylation on Thr-235, Ser-231 and Thr-226 and DNA binding activity which delays the adipocyte differentiation program. In terms of processing, acetylated. Acetylation at Lys-43 is an important and dynamic regulatory event that contributes to its ability to transactivate target genes, including those associated with adipogenesis and adipocyte function. Deacetylation by HDAC1 represses its transactivation activity. Acetylated by KAT2A and KAT2B within a cluster of lysine residues between amino acids 129-133, this acetylation is strongly induced by glucocorticoid treatment and enhances transactivation activity. As to expression, expressed at low levels in the lung, kidney and spleen.

The protein resides in the nucleus. The protein localises to the cytoplasm. Functionally, important transcription factor regulating the expression of genes involved in immune and inflammatory responses. Also plays a significant role in adipogenesis, as well as in the gluconeogenic pathway, liver regeneration, and hematopoiesis. The consensus recognition site is 5'-T[TG]NNGNAA[TG]-3'. Its functional capacity is governed by protein interactions and post-translational protein modifications. During early embryogenesis, plays essential and redundant roles with CEBPA. Has a promitotic effect on many cell types such as hepatocytes and adipocytes but has an antiproliferative effect on T-cells by repressing MYC expression, facilitating differentiation along the T-helper 2 lineage. Binds to regulatory regions of several acute-phase and cytokines genes and plays a role in the regulation of acute-phase reaction and inflammation. Also plays a role in intracellular bacteria killing. During adipogenesis, is rapidly expressed and, after activation by phosphorylation, induces CEBPA and PPARG, which turn on the series of adipocyte genes that give rise to the adipocyte phenotype. The delayed transactivation of the CEBPA and PPARG genes by CEBPB appears necessary to allow mitotic clonal expansion and thereby progression of terminal differentiation. Essential for female reproduction because of a critical role in ovarian follicle development. Restricts osteoclastogenesis: together with NFE2L1; represses expression of DSPP during odontoblast differentiation. In terms of biological role, essential for gene expression induction in activated macrophages. Plays a major role in immune responses such as CD4(+) T-cell response, granuloma formation and endotoxin shock. Not essential for intracellular bacteria killing. Its function is as follows. Acts as a dominant negative through heterodimerization with isoform 2. Promotes osteoblast differentiation and osteoclastogenesis. The chain is CCAAT/enhancer-binding protein beta from Homo sapiens (Human).